The chain runs to 283 residues: ATP phosphoribosyltransferase (283 aa).

The protein belongs to the ATP phosphoribosyltransferase family. Long subfamily. It depends on Mg(2+) as a cofactor.

The protein localises to the cytoplasm. It catalyses the reaction 1-(5-phospho-beta-D-ribosyl)-ATP + diphosphate = 5-phospho-alpha-D-ribose 1-diphosphate + ATP. Its pathway is amino-acid biosynthesis; L-histidine biosynthesis; L-histidine from 5-phospho-alpha-D-ribose 1-diphosphate: step 1/9. Feedback inhibited by histidine. Its function is as follows. Catalyzes the condensation of ATP and 5-phosphoribose 1-diphosphate to form N'-(5'-phosphoribosyl)-ATP (PR-ATP). Has a crucial role in the pathway because the rate of histidine biosynthesis seems to be controlled primarily by regulation of HisG enzymatic activity. The chain is ATP phosphoribosyltransferase from Bifidobacterium longum (strain NCC 2705).